A 648-amino-acid polypeptide reads, in one-letter code: DNA ligase (648 aa).

NAD(+)-binding positions include 30 to 34 (DEEYD) and 79 to 80 (SQ). The active-site N6-AMP-lysine intermediate is the lysine 110. Residues arginine 131, glutamate 165, lysine 280, and lysine 304 each contribute to the NAD(+) site. Residues cysteine 398, cysteine 401, cysteine 414, and cysteine 419 each contribute to the Zn(2+) site. The BRCT domain maps to 573 to 648 (VSENPFKNKT…LTEEEMNSLF (76 aa)).

The protein belongs to the NAD-dependent DNA ligase family. LigA subfamily. Requires Mg(2+) as cofactor. It depends on Mn(2+) as a cofactor.

The enzyme catalyses NAD(+) + (deoxyribonucleotide)n-3'-hydroxyl + 5'-phospho-(deoxyribonucleotide)m = (deoxyribonucleotide)n+m + AMP + beta-nicotinamide D-nucleotide.. DNA ligase that catalyzes the formation of phosphodiester linkages between 5'-phosphoryl and 3'-hydroxyl groups in double-stranded DNA using NAD as a coenzyme and as the energy source for the reaction. It is essential for DNA replication and repair of damaged DNA. This is DNA ligase from Aliarcobacter butzleri (strain RM4018) (Arcobacter butzleri).